The sequence spans 185 residues: MLILVLAINFLGTVYGYYWYLPQLLETPARFLIFVPDSPTATFFFLFVLLAFLMKRNAPLLEALALVTLVKYGLWAVAMNFLVLAVTGDLPWEGYMLIASHFAMAVQGVLYSPYFRFSFWHLAIAAVWTLHNDVIDYLFDMMPQYSMLSDYMTEIGYGTFWLSIFSIALAYFLVVSKKQTKLELM.

Helical transmembrane passes span 32–52 (LIFVPDSPTATFFFLFVLLAF), 66–86 (LVTLVKYGLWAVAMNFLVLAV), and 155–175 (IGYGTFWLSIFSIALAYFLVV).

Its subcellular location is the cell membrane. This is an uncharacterized protein from Bacillus subtilis (strain 168).